A 150-amino-acid chain; its full sequence is UPF0756 membrane protein Asuc_1151 (150 aa).

4 consecutive transmembrane segments (helical) span residues methionine 1–leucine 21, tyrosine 52–glycine 72, leucine 82–glycine 102, and isoleucine 123–leucine 143.

It belongs to the UPF0756 family.

It is found in the cell membrane. The chain is UPF0756 membrane protein Asuc_1151 from Actinobacillus succinogenes (strain ATCC 55618 / DSM 22257 / CCUG 43843 / 130Z).